The chain runs to 146 residues: D-aminoacyl-tRNA deacylase (146 aa).

The Gly-cisPro motif, important for rejection of L-amino acids motif lies at 138–139 (GP).

Belongs to the DTD family. In terms of assembly, homodimer.

The protein localises to the cytoplasm. The catalysed reaction is glycyl-tRNA(Ala) + H2O = tRNA(Ala) + glycine + H(+). It carries out the reaction a D-aminoacyl-tRNA + H2O = a tRNA + a D-alpha-amino acid + H(+). Its function is as follows. An aminoacyl-tRNA editing enzyme that deacylates mischarged D-aminoacyl-tRNAs. Also deacylates mischarged glycyl-tRNA(Ala), protecting cells against glycine mischarging by AlaRS. Acts via tRNA-based rather than protein-based catalysis; rejects L-amino acids rather than detecting D-amino acids in the active site. By recycling D-aminoacyl-tRNA to D-amino acids and free tRNA molecules, this enzyme counteracts the toxicity associated with the formation of D-aminoacyl-tRNA entities in vivo and helps enforce protein L-homochirality. This Xanthomonas oryzae pv. oryzae (strain MAFF 311018) protein is D-aminoacyl-tRNA deacylase.